The following is a 784-amino-acid chain: MSMTLFASVTRPGLPGPTALRFPETRHLFHSVTAFAASFSPSKSSVGSSQCNATTPPAEYKEYTGNDLAKTTVDGIEKDIHSNKGLSDKTRELVMSIRSILRTMEEGEISMSPYDTAWVAMVEDIDGGGGPHFPSTLDWISSNQLADGSWGDPIFLVYDRLINTFACVIALTSWKMHPDKCDKAISFIRENMYKLDDEKEERMPIGFEMTFPPLVEKAKRLNINFPDDSPGLRKIYAQRDLKFKRIPWDKMHTVPTTLLYSLEGMALEADVLDWQKLLKLQSPDGSLFYSPASTAFALQQTGDHNCLQYLLKLVQTFNGGVPNLYPLDLYERSWAVDRLQRLGISRFFEPQIEECMKYVHRYWSNKNGVYAARHSDIQDIDDTSMGFRVLRLNGFDVSPDAFKQFEDDDGEFLCFIGQTNHSVSATYNLYRASQVMFPGEEILQRAKKFSTKFLQDKRAENELLDKWVITKDLPGEVGYALDVPWYASLPRVEARFYIEQYGGEDVAWIGKVLFRAPNVNNDNYLELAKLDYNDCQALHQHEWKNIQQWYKSCGLRGFGLGEESLLLAYYIAAASVFEPEKSGERLAWAKTAALVKTITSQKLTKDQKHDFIREFEQGSILENANGGRCGTSNKLVETIFTTVHKMSLETSSRDIHHQLLHAWRKWVVAWEVGGDGDAELFVQTLNLTGGSSEPTPFCHPKYQQLLEVTTRICHQLRKSTVKEIQVESDMQELVKLVVTKSSGDLDSDIKQKFLTIARSFYYAAHCSTEAIGFHIVKVLFERLV.

Residues 1–57 (MSMTLFASVTRPGLPGPTALRFPETRHLFHSVTAFAASFSPSKSSVGSSQCNATTPP) constitute a chloroplast transit peptide. Substrate is bound at residue Lys242. The Mg(2+) site is built by Asp379 and Asp381. Residues 379–382 (DIDD) carry the DXDD motif motif. Lys466 lines the substrate pocket.

It belongs to the terpene synthase family. Mg(2+) is required as a cofactor. Present in both leaves and flowers.

It localises to the plastid. It is found in the chloroplast. It functions in the pathway plant hormone biosynthesis; gibberellin biosynthesis. The protein operates within secondary metabolite biosynthesis; terpenoid biosynthesis. Its function is as follows. Involved in the biosynthesis of labdane-type diterpenoid including marrubiin and other labdane-related furanoid diterpenoids with potential applications as anti-diabetics, analgesics or vasorelaxants. May be involved in the conversion of geranylgeranyl diphosphate (GGPP) to ent-copalyl diphosphate (ent-CPP) and 8-hydroxycopalyl diphosphate (LPP, labda-13-en-8-ol diphosphate). The protein is ent-copalyl diphosphate synthase 2, chloroplastic of Marrubium vulgare (White horehound).